A 165-amino-acid polypeptide reads, in one-letter code: Phosphopantetheine adenylyltransferase (165 aa).

Residue serine 10 coordinates substrate. ATP contacts are provided by residues 10-11 (SF) and histidine 18. 3 residues coordinate substrate: lysine 42, leucine 74, and arginine 88. Residues 89–91 (GLR), glutamate 99, and 124–130 (YSFLSSS) each bind ATP.

The protein belongs to the bacterial CoaD family. As to quaternary structure, homohexamer. Requires Mg(2+) as cofactor.

Its subcellular location is the cytoplasm. It catalyses the reaction (R)-4'-phosphopantetheine + ATP + H(+) = 3'-dephospho-CoA + diphosphate. Its pathway is cofactor biosynthesis; coenzyme A biosynthesis; CoA from (R)-pantothenate: step 4/5. Its function is as follows. Reversibly transfers an adenylyl group from ATP to 4'-phosphopantetheine, yielding dephospho-CoA (dPCoA) and pyrophosphate. This is Phosphopantetheine adenylyltransferase from Anoxybacillus flavithermus (strain DSM 21510 / WK1).